The sequence spans 123 residues: Histone H2B (123 aa).

Residues 1 to 32 (MAPKAPGKGAKKAAKSKAPRAPGDRKRKRTRR) are disordered. Over residues 9–18 (GAKKAAKSKA) the composition is skewed to basic residues. The O-linked (GlcNAc) serine glycan is linked to Ser110. Lys118 participates in a covalent cross-link: Glycyl lysine isopeptide (Lys-Gly) (interchain with G-Cter in ubiquitin).

This sequence belongs to the histone H2B family. As to quaternary structure, the nucleosome is a histone octamer containing two molecules each of H2A, H2B, H3 and H4 assembled in one H3-H4 heterotetramer and two H2A-H2B heterodimers. The octamer wraps approximately 147 bp of DNA. Monoubiquitination of Lys-118 gives a specific tag for epigenetic transcriptional activation and is also prerequisite for histone H3 'Lys-4' and 'Lys-79' methylation. Post-translationally, glcNAcylation at Ser-110 promotes monoubiquitination of Lys-118. It fluctuates in response to extracellular glucose, and associates with transcribed genes.

It localises to the nucleus. The protein resides in the chromosome. Its function is as follows. Core component of nucleosome. Nucleosomes wrap and compact DNA into chromatin, limiting DNA accessibility to the cellular machineries which require DNA as a template. Histones thereby play a central role in transcription regulation, DNA repair, DNA replication and chromosomal stability. DNA accessibility is regulated via a complex set of post-translational modifications of histones, also called histone code, and nucleosome remodeling. In Holothuria tubulosa (Tubular sea cucumber), this protein is Histone H2B.